The following is a 210-amino-acid chain: Large ribosomal subunit protein uL3 (210 aa).

The interval 120–143 is disordered; it reads FQGNIKKDGQSRGPMGHGSRYHRR.

The protein belongs to the universal ribosomal protein uL3 family. As to quaternary structure, part of the 50S ribosomal subunit. Forms a cluster with proteins L14 and L19.

Functionally, one of the primary rRNA binding proteins, it binds directly near the 3'-end of the 23S rRNA, where it nucleates assembly of the 50S subunit. This chain is Large ribosomal subunit protein uL3, found in Latilactobacillus sakei subsp. sakei (strain 23K) (Lactobacillus sakei subsp. sakei).